The sequence spans 463 residues: Increased DNA methylation 3 (463 aa).

Residues 169–182 (NLDESRETEQDCSR) show a composition bias toward basic and acidic residues. Disordered stretches follow at residues 169–199 (NLDE…DYNS) and 300–347 (RRFK…TTGT). Residues 184–199 (GDATANGVVTNEDYNS) show a composition bias toward polar residues. The segment covering 300–310 (RRFKNSSKKAT) has biased composition (basic residues).

In terms of assembly, interacts with MBD7 (via C-terminus), IDM1 and IDM2. Part of a complex made of MBD7, IDM1, IDM2 and IDM3.

The protein resides in the nucleus. Acts as an anti-silencing factor that prevents DNA hypermethylation and gene repression. This is Increased DNA methylation 3 from Arabidopsis thaliana (Mouse-ear cress).